Here is a 309-residue protein sequence, read N- to C-terminus: (S)-sulfolactate dehydrogenase (309 aa).

Residues 151 to 152, Asp171, 231 to 233, and Asp257 contribute to the NAD(+) site; these read GI and TAR. The active site involves Arg233. Residue Glu262 is part of the active site. The Proton donor role is filled by His281. 281–284 contacts NAD(+); that stretch reads HIAG.

It belongs to the D-isomer specific 2-hydroxyacid dehydrogenase family.

The catalysed reaction is (2S)-3-sulfolactate + NAD(+) = 3-sulfopyruvate + NADH + H(+). Dehydrogenase of the (R,S)-sulfolactate degradation pathway that only acts on the (S)-enantiomer of 3-sulfolactate. Together with ComC, provides a racemase system that converts (2S)-3-sulfolactate to (2R)-3-sulfolactate, which is degraded further by (2R)-sulfolactate sulfo-lyase. Specific for NAD. Also able to form sulfolactate from sulfopyruvate. The chain is (S)-sulfolactate dehydrogenase (slcC) from Chromohalobacter salexigens (strain ATCC BAA-138 / DSM 3043 / CIP 106854 / NCIMB 13768 / 1H11).